The primary structure comprises 331 residues: D-alanine--D-alanine ligase (331 aa).

An ATP-grasp domain is found at 116 to 316 (KRLWQTHSLP…YEDFVLQLAA (201 aa)). An ATP-binding site is contributed by 142 to 197 (ADRLGLPLIVKPAREGSSIGLTKVTSVAELPAAYEKAARLDRDVMAEQFIDGDELT). Mg(2+) contacts are provided by aspartate 269, glutamate 283, and asparagine 285.

This sequence belongs to the D-alanine--D-alanine ligase family. The cofactor is Mg(2+). Mn(2+) is required as a cofactor.

It is found in the cytoplasm. It carries out the reaction 2 D-alanine + ATP = D-alanyl-D-alanine + ADP + phosphate + H(+). Its pathway is cell wall biogenesis; peptidoglycan biosynthesis. Functionally, cell wall formation. The protein is D-alanine--D-alanine ligase of Ralstonia nicotianae (strain ATCC BAA-1114 / GMI1000) (Ralstonia solanacearum).